The primary structure comprises 256 residues: Triosephosphate isomerase (256 aa).

Substrate is bound at residue 12-14 (NWK). Residue His99 is the Electrophile of the active site. Residue Glu169 is the Proton acceptor of the active site. Substrate-binding positions include Gly175, Ser214, and 235 to 236 (GG).

This sequence belongs to the triosephosphate isomerase family. Homodimer.

The protein localises to the cytoplasm. It catalyses the reaction D-glyceraldehyde 3-phosphate = dihydroxyacetone phosphate. The protein operates within carbohydrate biosynthesis; gluconeogenesis. Its pathway is carbohydrate degradation; glycolysis; D-glyceraldehyde 3-phosphate from glycerone phosphate: step 1/1. Functionally, involved in the gluconeogenesis. Catalyzes stereospecifically the conversion of dihydroxyacetone phosphate (DHAP) to D-glyceraldehyde-3-phosphate (G3P). The sequence is that of Triosephosphate isomerase from Mesorhizobium japonicum (strain LMG 29417 / CECT 9101 / MAFF 303099) (Mesorhizobium loti (strain MAFF 303099)).